A 250-amino-acid polypeptide reads, in one-letter code: ATP synthase subunit a (250 aa).

The next 6 membrane-spanning stretches (helical) occupy residues 29–49 (ASLFMAASAAIAAGFLYFATS), 84–104 (FFPLVFSLFMFVLTANLLGMF), 114–134 (IIVTAALAILVIGTVVVYGFY), 143–163 (VFVPSGVPGILLPLVVTIEII), 193–213 (FVASLGALGAVGVGGAVLPLI), and 216–236 (VALTGLEFLVAFLQAYVFAVL).

It belongs to the ATPase A chain family. As to quaternary structure, F-type ATPases have 2 components, CF(1) - the catalytic core - and CF(0) - the membrane proton channel. CF(1) has five subunits: alpha(3), beta(3), gamma(1), delta(1), epsilon(1). CF(0) has three main subunits: a(1), b(2) and c(9-12). The alpha and beta chains form an alternating ring which encloses part of the gamma chain. CF(1) is attached to CF(0) by a central stalk formed by the gamma and epsilon chains, while a peripheral stalk is formed by the delta and b chains.

The protein localises to the cell inner membrane. Its function is as follows. Key component of the proton channel; it plays a direct role in the translocation of protons across the membrane. The chain is ATP synthase subunit a from Rhizobium johnstonii (strain DSM 114642 / LMG 32736 / 3841) (Rhizobium leguminosarum bv. viciae).